The following is a 475-amino-acid chain: MTKQYKNYVNGEWKLSENEIKIYEPASGAELGSVPAMSTEEVDYVYASAKKAQPAWRSLSYIERAAYLHKVADILMRDKEKIGAVLSKEVAKGYKSAVSEVVRTAEIINYAAEEGLRMEGEVLEGGSFEAASKKKIAVVRREPVGLVLAISPFNYPVNLAGSKIAPALIAGNVIAFKPPTQGSISGLLLAEAFAEAGLPAGVFNTITGRGSEIGDYIVEHQAVNFINFTGSTGIGERIGKMAGMRPIMLELGGKDSAIVLEDADLELTAKNIIAGAFGYSGQRCTAVKRVLVMESVADELVEKIREKVLALTIGNPEDDADITPLIDTKSADYVEGLINDANDKGAAALTEIKREGNLICPILFDKVTTDMRLAWEEPFGPVLPIIRVTSVEEAIEISNKSEYGLQASIFTNDFPRAFGIAEQLEVGTVHINNKTQRGTDNFPFLGAKKSGAGIQGVKYSIEAMTTVKSVVFDIK.

Arg-103 contacts substrate. Residue Ser-151 participates in NADP(+) binding. 154–155 (NY) is a substrate binding site. Residues Lys-177, Thr-180, Asp-215, and 230 to 251 (GSTGIGERIGKMAGMRPIMLEL) contribute to the NADP(+) site. Residues Glu-250 and Cys-284 contribute to the active site. 283–285 (RCT) contributes to the substrate binding site. Glu-377 contacts NADP(+). Arg-437 provides a ligand contact to substrate.

It belongs to the aldehyde dehydrogenase family. As to quaternary structure, homotetramer.

The enzyme catalyses D-glyceraldehyde 3-phosphate + NADP(+) + H2O = (2R)-3-phosphoglycerate + NADPH + 2 H(+). In Streptococcus mutans serotype c (strain ATCC 700610 / UA159), this protein is NADP-dependent glyceraldehyde-3-phosphate dehydrogenase (gapN).